We begin with the raw amino-acid sequence, 344 residues long: MATPYVPVPMPIGNSASSFTNNRNQRSSSFGSVSTSSNSSKGQLEDSSVGTCKHTNVQDQMDSASSVCGSPLIRTKFTGTDSSIEYSARPRDTEEQHPDALNWEDRPSTPTILGYEVMEERAKFTVYKILVKKSPEESWVVFRRYTDFSRLNDKLKEMFPGFRLALPPKRWFKDNYNADFLEDRQLGLQAFLQNLVAHKDIANCLAVREFLCLDDPPGPFDSLEESRAFCETLEETNYHLQRELLEKQKEVESLKKLLGEKQLHIDALETRIRTLSLEPGASLYVSRAEGGQILRVQSSVLQVNRDVLDEESRADHKPHFNSREAGSAIADIEVAQLAYNAEDD.

A compositionally biased stretch (pro residues) spans 1-10 (MATPYVPVPM). 2 disordered regions span residues 1–49 (MATP…DSSV) and 83–105 (SIEYSARPRDTEEQHPDALNWED). A compositionally biased stretch (polar residues) spans 14–26 (NSASSFTNNRNQR). Residues 27-40 (SSSFGSVSTSSNSS) are compositionally biased toward low complexity. Over residues 88-105 (ARPRDTEEQHPDALNWED) the composition is skewed to basic and acidic residues. The PX domain occupies 105 to 218 (DRPSTPTILG…EFLCLDDPPG (114 aa)). Residues arginine 144, threonine 146, and arginine 184 each contribute to the a 1,2-diacyl-sn-glycero-3-phospho-(1D-myo-inositol-3-phosphate) site. The residue at position 222 (serine 222) is a Phosphoserine. Residues 223-278 (LEESRAFCETLEETNYHLQRELLEKQKEVESLKKLLGEKQLHIDALETRIRTLSLE) adopt a coiled-coil conformation.

The protein belongs to the sorting nexin family. Homooligomer. Interacts with EGFR.

It localises to the early endosome membrane. It is found in the late endosome membrane. Its subcellular location is the cytoplasm. The protein localises to the lysosome. May be involved in several stages of intracellular trafficking. Plays a role in protein transport from early to late endosomes. Plays a role in protein transport to the lysosome. Promotes degradation of EGFR after EGF signaling. This chain is Sorting nexin-16 (Snx16), found in Rattus norvegicus (Rat).